We begin with the raw amino-acid sequence, 147 residues long: Nucleoside diphosphate kinase (147 aa).

Positions 9, 57, 85, 91, 102, and 112 each coordinate ATP. Histidine 115 (pros-phosphohistidine intermediate) is an active-site residue.

It belongs to the NDK family. In terms of assembly, homotetramer. The cofactor is Mg(2+).

Its subcellular location is the cytoplasm. It carries out the reaction a 2'-deoxyribonucleoside 5'-diphosphate + ATP = a 2'-deoxyribonucleoside 5'-triphosphate + ADP. The enzyme catalyses a ribonucleoside 5'-diphosphate + ATP = a ribonucleoside 5'-triphosphate + ADP. In terms of biological role, major role in the synthesis of nucleoside triphosphates other than ATP. The ATP gamma phosphate is transferred to the NDP beta phosphate via a ping-pong mechanism, using a phosphorylated active-site intermediate. In Listeria welshimeri serovar 6b (strain ATCC 35897 / DSM 20650 / CCUG 15529 / CIP 8149 / NCTC 11857 / SLCC 5334 / V8), this protein is Nucleoside diphosphate kinase.